The chain runs to 490 residues: Glutamate--tRNA ligase (490 aa).

Positions 12–22 (PSPTGTPHVGL) match the 'HIGH' region motif. Residues 256-260 (KLSKR) carry the 'KMSKS' region motif. Lys-259 serves as a coordination point for ATP.

This sequence belongs to the class-I aminoacyl-tRNA synthetase family. Glutamate--tRNA ligase type 1 subfamily. Monomer.

It is found in the cytoplasm. The enzyme catalyses tRNA(Glu) + L-glutamate + ATP = L-glutamyl-tRNA(Glu) + AMP + diphosphate. In terms of biological role, catalyzes the attachment of glutamate to tRNA(Glu) in a two-step reaction: glutamate is first activated by ATP to form Glu-AMP and then transferred to the acceptor end of tRNA(Glu). The chain is Glutamate--tRNA ligase from Mycobacterium sp. (strain JLS).